The sequence spans 231 residues: 7-cyano-7-deazaguanine synthase (231 aa).

ATP is bound at residue Phe-8 to Leu-18. 4 residues coordinate Zn(2+): Cys-188, Cys-197, Cys-200, and Cys-203.

It belongs to the QueC family. Zn(2+) is required as a cofactor.

The catalysed reaction is 7-carboxy-7-deazaguanine + NH4(+) + ATP = 7-cyano-7-deazaguanine + ADP + phosphate + H2O + H(+). The protein operates within purine metabolism; 7-cyano-7-deazaguanine biosynthesis. Its function is as follows. Catalyzes the ATP-dependent conversion of 7-carboxy-7-deazaguanine (CDG) to 7-cyano-7-deazaguanine (preQ(0)). This Salmonella schwarzengrund (strain CVM19633) protein is 7-cyano-7-deazaguanine synthase.